Consider the following 254-residue polypeptide: Cytokine-inducible SH2-containing protein (254 aa).

The 107-residue stretch at 82–188 (WYWGSITASE…ATTPALPTPK (107 aa)) folds into the SH2 domain. Residues 171-195 (TRSDSPDLATTPALPTPKEDAPGDP) are disordered. An SOCS box domain is found at 205–253 (KLVQPFVRRSSTRSLQHLCRLVINRLVVDVDCLPLPRRMADYLRQYPFQ).

Stably associated with the tyrosine-phosphorylated IL3 receptor beta chain and tyrosine-phosphorylated EPO receptor (EPOR).

It functions in the pathway protein modification; protein ubiquitination. In terms of biological role, SOCS family proteins form part of a classical negative feedback system that regulates cytokine signal transduction. CIS is involved in the negative regulation of cytokines that signal through the JAK-STAT5 pathway such as erythropoietin, prolactin and interleukin 3 (IL3) receptor. Inhibits STAT5 trans-activation by suppressing its tyrosine phosphorylation. May be a substrate recognition component of a SCF-like ECS (Elongin BC-CUL2/5-SOCS-box protein) E3 ubiquitin-protein ligase complex which mediates the ubiquitination and subsequent proteasomal degradation of target proteins. The chain is Cytokine-inducible SH2-containing protein (CISH) from Bos taurus (Bovine).